The primary structure comprises 732 residues: Elongation factor 2 (732 aa).

The tr-type G domain maps to 19–228 (ELIRNIGIVA…TKITFKDIVE (210 aa)). GTP is bound by residues 28–35 (AHIDHGKT), 94–98 (DTPGH), and 148–151 (NKID). A Diphthamide modification is found at H598.

This sequence belongs to the TRAFAC class translation factor GTPase superfamily. Classic translation factor GTPase family. EF-G/EF-2 subfamily.

It is found in the cytoplasm. Functionally, catalyzes the GTP-dependent ribosomal translocation step during translation elongation. During this step, the ribosome changes from the pre-translocational (PRE) to the post-translocational (POST) state as the newly formed A-site-bound peptidyl-tRNA and P-site-bound deacylated tRNA move to the P and E sites, respectively. Catalyzes the coordinated movement of the two tRNA molecules, the mRNA and conformational changes in the ribosome. The chain is Elongation factor 2 (fusA) from Thermoplasma acidophilum (strain ATCC 25905 / DSM 1728 / JCM 9062 / NBRC 15155 / AMRC-C165).